The sequence spans 548 residues: Chaperonin GroEL (548 aa).

Residues T30–P33, K51, D87–T91, G415, and N479–V481 contribute to the ATP site.

Belongs to the chaperonin (HSP60) family. As to quaternary structure, forms a cylinder of 14 subunits composed of two heptameric rings stacked back-to-back. Interacts with the co-chaperonin GroES.

Its subcellular location is the cytoplasm. The catalysed reaction is ATP + H2O + a folded polypeptide = ADP + phosphate + an unfolded polypeptide.. In terms of biological role, together with its co-chaperonin GroES, plays an essential role in assisting protein folding. The GroEL-GroES system forms a nano-cage that allows encapsulation of the non-native substrate proteins and provides a physical environment optimized to promote and accelerate protein folding. In Stenotrophomonas maltophilia (Pseudomonas maltophilia), this protein is Chaperonin GroEL.